A 2925-amino-acid polypeptide reads, in one-letter code: TPR and ankyrin repeat-containing protein 1 (2925 aa).

TPR repeat units lie at residues 15 to 48 (AVLLCNKSNAFFSLGKWNEAFVAAKECLQWDPTY) and 50 to 82 (KGYYRAGYSLLRLHQPYEAARMFFEGLRLVQRS). ANK repeat units lie at residues 168-198 (EKYVFIGLYEKMEQVPKLVQWLISIGASVET), 203-232 (PLHALMRLCIQARENHLFRWLMDHKPEWKG), 240-276 (DGCTVLHVVAAHSPGYLVKRQTEDVQMLLRFGADPTL), 463-492 (SQERPVVTCLKHEDFELAFLLLTKGADPRA), 497-518 (EGDTPLHAALHIFLEIKADIGF), and 546-575 (NGNTLMHILFQKGMLKRVKKLLDLLVKFDI). Disordered regions lie at residues 612 to 669 (SRQD…LPGT), 706 to 741 (PEDCLQSSEPLEAGAGKEGKKDDKPTLGAGAPDCSE), and 1077 to 1103 (VEPGKESPGGEEEEEEEDEEEEDSIEV). Residues 624-641 (SKSTAPGHTSQLKSQGSF) show a composition bias toward polar residues. The segment covering 720-730 (AGKEGKKDDKP) has biased composition (basic and acidic residues). A compositionally biased stretch (acidic residues) spans 1085 to 1103 (GGEEEEEEEDEEEEDSIEV). 2 TPR repeats span residues 1699 to 1732 (PAEWIAQGDYYAKHQCWKVAAKCYQKGGAFEKEK) and 1793 to 1826 (LGKIRDAAYFYKRSQCYKDAFRCFEQIQEFDLAL). The stretch at 2301 to 2330 (EEFEKLLHQEEDNYNRELKALESEKDERGR) forms a coiled coil.

In Homo sapiens (Human), this protein is TPR and ankyrin repeat-containing protein 1 (TRANK1).